The primary structure comprises 1120 residues: TBC1 domain family member 8B (1120 aa).

GRAM domains are found at residues 145–212 and 285–353; these read LKFE…EKTS and EQFN…DKTN. In terms of domain architecture, Rab-GAP TBC spans 487 to 674; that stretch reads GIPETLRGEL…NVVDCFFYDG (188 aa). Residues 858–893 form the EF-hand domain; the sequence is NKDSLALWTFRLLDENSDCLINFKEFSSAIDIMYNG. The disordered stretch occupies residues 1035–1066; that stretch reads SPTSSAKGFSGTVCGSGGPSEEKTGSHLEKDP. Over residues 1054 to 1066 the composition is skewed to basic and acidic residues; the sequence is SEEKTGSHLEKDP.

In terms of assembly, interacts (via domain Rab-GAP TBC) with RAB11B (in GTP-bound form). Kidney (at protein level).

It is found in the cytoplasm. It localises to the cytosol. Involved in vesicular recycling, probably as a RAB11B GTPase-activating protein. The polypeptide is TBC1 domain family member 8B (TBC1D8B) (Homo sapiens (Human)).